Reading from the N-terminus, the 650-residue chain is NAC domain-containing protein 54 (650 aa).

In terms of domain architecture, NAC spans 6 to 156; sequence LPPGFRFHPT…AYALCRVFKK (151 aa). The DNA-binding element occupies 105 to 162; the sequence is VGMKKTLVYYRGRAPHGSRTDWVMHEYRLDERECETDTGLQDAYALCRVFKKTAPGPK.

In terms of tissue distribution, expressed in leaves, roots and flowers.

Its subcellular location is the nucleus. Transcription factor that functions as a regulator of the jasmonate (JA) signaling pathway. May regulate the expression of genes encoding JA biosynthetic enzymes, such as lipoxygenase 7 (CM-LOX1), allene oxide synthase 2 (AOS2) and OPDA reductase 7 (OPR7). Involved in abscisic acid-induced leaf senescence. Activates the abscisic acid (ABA) signaling-associated gene ABI5 and the senescence-associated gene NYC1 by directly binding to the mitochondrial dysfunction motif (MDM) present in their promoters. Possesses transcriptional activator activity in yeast. Required for the multiplication of the rice dwarf virus (RDV). The chain is NAC domain-containing protein 54 from Oryza sativa subsp. japonica (Rice).